A 132-amino-acid chain; its full sequence is ATP synthase epsilon chain, chloroplastic (132 aa).

Belongs to the ATPase epsilon chain family. In terms of assembly, F-type ATPases have 2 components, CF(1) - the catalytic core - and CF(0) - the membrane proton channel. CF(1) has five subunits: alpha(3), beta(3), gamma(1), delta(1), epsilon(1). CF(0) has three main subunits: a, b and c.

The protein localises to the plastid. It is found in the chloroplast thylakoid membrane. In terms of biological role, produces ATP from ADP in the presence of a proton gradient across the membrane. This chain is ATP synthase epsilon chain, chloroplastic, found in Adiantum capillus-veneris (Maidenhair fern).